We begin with the raw amino-acid sequence, 417 residues long: Phosphoglycerate kinase 1 (417 aa).

The residue at position 2 (S2) is an N-acetylserine. Phosphoserine is present on residues S2 and S4. K6 bears the N6-succinyllysine mark. Position 11 is an N6-acetyllysine (K11). Residues V23, D24, F25, N26, Q38, and R39 each contribute to the (2R)-3-phosphoglycerate site. Residues 38-43 (QRIKAA) form a mitochondrial targeting region exposed following cis-trans isomerization by PIN1 and recognized by the TOM complex for mitochondrial translocation of the protein region. K48 bears the N6-acetyllysine; alternate mark. K48 is subject to N6-succinyllysine; alternate. The (2R)-3-phosphoglycerate site is built by S62, H63, G65, and R66. K75 bears the N6-acetyllysine mark. Position 76 is a phosphotyrosine (Y76). K86 and K91 each carry N6-acetyllysine. K97 carries the N6-acetyllysine; alternate modification. K97 carries the N6-(2-hydroxyisobutyryl)lysine; alternate modification. (2R)-3-phosphoglycerate contacts are provided by L122 and R123. An N6-acetyllysine; alternate modification is found at K131. K131 carries the N6-malonyllysine; alternate modification. K146 is subject to N6-acetyllysine. The (2R)-3-phosphoglycerate site is built by H170 and R171. The residue at position 191 (K191) is an N6-succinyllysine. Residue Y196 is modified to Phosphotyrosine. K199 carries the N6-acetyllysine modification. S203 carries the post-translational modification Phosphoserine. G214 contacts ADP. Position 214 (G214) interacts with CDP. AMP is bound by residues A215 and K216. ATP is bound at residue A215. Residue A215 coordinates Mg(2+). Residue K216 is modified to N6-(2-hydroxyisobutyryl)lysine. Positions 218 and 219 each coordinate Mg(2+). CDP is bound at residue D219. Residue K220 participates in AMP binding. K220 serves as a coordination point for ATP. N6-(2-hydroxyisobutyryl)lysine is present on K220. ADP is bound at residue G238. G238 lines the CDP pocket. G239 serves as a coordination point for AMP. An ATP-binding site is contributed by G239. K267 and K291 each carry N6-acetyllysine. AMP is bound at residue G313. G313 lines the ATP pocket. Residue K323 is modified to N6-(2-hydroxyisobutyryl)lysine. CDP is bound by residues G338, V340, and F343. F343 serves as a coordination point for ADP. E344 is an AMP binding site. E344 lines the ATP pocket. At K361 the chain carries N6-acetyllysine. ATP is bound by residues D375 and T376. D375 lines the Mg(2+) pocket.

It belongs to the phosphoglycerate kinase family. As to quaternary structure, monomer. Interacts with kinase MAPK1/ERK2; the interaction is direct, occurs under hypoxic conditions, and promotes its interaction with PIN1. Interacts with peptidyl-prolyl cis-trans isomerase PIN1; the interaction is direct, occurs under hypoxic conditions, and targets the protein to the mitochondrion by promoting interactions with the TOM complex. Interacts with mitochondrial circRNA mcPGK1 (via its 2nd stem-loop); the interaction is direct and targets the protein to the mitochondrion by promoting interactions with the TOM complex. Interacts with pyruvate dehydrogenase kinase PDK1; the interaction is direct, occurs under hypoxic conditions and leads to PDK1-mediated inhibition of pyruvate dehydrogenase complex activity. The cofactor is Mg(2+). Phosphorylated at Ser-203 by MAPK1/ERK2 under hypoxic conditions, which promotes its mitochondrial targeting. In terms of tissue distribution, testis, lung, brain, skeletal muscle, liver, intestine, and kidney (at protein level).

The protein resides in the cytoplasm. It is found in the cytosol. The protein localises to the mitochondrion matrix. The catalysed reaction is (2R)-3-phosphoglycerate + ATP = (2R)-3-phospho-glyceroyl phosphate + ADP. It carries out the reaction L-seryl-[protein] + ATP = O-phospho-L-seryl-[protein] + ADP + H(+). The protein operates within carbohydrate degradation; glycolysis; pyruvate from D-glyceraldehyde 3-phosphate: step 2/5. Its function is as follows. Catalyzes one of the two ATP producing reactions in the glycolytic pathway via the reversible conversion of 1,3-diphosphoglycerate to 3-phosphoglycerate. Both L- and D- forms of purine and pyrimidine nucleotides can be used as substrates, but the activity is much lower on pyrimidines. In addition to its role as a glycolytic enzyme, it seems that PGK-1 acts as a polymerase alpha cofactor protein (primer recognition protein). Acts as a protein kinase when localized to the mitochondrion where it phosphorylates pyruvate dehydrogenase kinase PDK1 to inhibit pyruvate dehydrogenase complex activity and suppress the formation of acetyl-coenzyme A from pyruvate, and consequently inhibit oxidative phosphorylation and promote glycolysis. May play a role in sperm motility. The chain is Phosphoglycerate kinase 1 (Pgk1) from Mus musculus (Mouse).